A 63-amino-acid chain; its full sequence is Anionic peptide 10.1 (63 aa).

An N-terminal signal peptide occupies residues 1 to 20 (MISRFCLLFLLVFVVSKIQA).

The protein belongs to the non-disulfide-bridged peptide (NDBP) superfamily. Long chain multifunctional peptide (group 2) family. As to expression, expressed by the venom gland.

The protein resides in the secreted. The polypeptide is Anionic peptide 10.1 (Lychas mucronatus (Chinese swimming scorpion)).